Consider the following 565-residue polypeptide: MTHRNSRQDTKELKPIADIAATIGLSEDDIEAYGRYKAKVRLEAISRFHSRPDASLILVSAMTPTPAGEGKTTVSIGLAQALARLGKATIAALREPSLGPVFGMKGGATGGGLSRVHPVDDINLHFTNDFAAVESAHNLLSAIVDNSVYHDNILNIDPRKVTWRRVLDMNDRFLRNIVIGLGGSVNGVPRETGFDIVPSSEIMAILCLSRSYRELKEKIRRILVGFTYDDSPVMAGDLKVEGAVTALLKYALLPNLVQTTENVPAIIHGGPFANIAQGTSSILGTDLALRLADYVVTEAGFGFDLGAEKFFDIVAPYGGLNPRIVVLVATVRALKYHAGIAQADLDRSNPRAAVLGMANLRKHYQNIDKFHVSCVIALNRFSSDTDEEINAVVRAAENEGMNIAPCDIFRLGGEGGLELAEKTLELLAGTSCGYRRLYEWNQPVEDKIFTVASEIYGAVSIDYQPLARRNLDLINKYGFDKLPVCIAKTQQSLSDNPGLLGLPRDFIVTVREIRIASGAGFLIPITGEILRMPGLSKRPAAYSIDIDDSGNITGVGSPGGISSLS.

65 to 72 (TPAGEGKT) is a binding site for ATP.

It belongs to the formate--tetrahydrofolate ligase family.

It carries out the reaction (6S)-5,6,7,8-tetrahydrofolate + formate + ATP = (6R)-10-formyltetrahydrofolate + ADP + phosphate. It functions in the pathway one-carbon metabolism; tetrahydrofolate interconversion. This chain is Formate--tetrahydrofolate ligase, found in Syntrophus aciditrophicus (strain SB).